A 259-amino-acid polypeptide reads, in one-letter code: Glutamate 5-kinase (259 aa).

Lys18 contacts ATP. The substrate site is built by Ser54, Asp141, and Asn153. 173-174 (SD) provides a ligand contact to ATP.

The protein belongs to the glutamate 5-kinase family.

Its subcellular location is the cytoplasm. It catalyses the reaction L-glutamate + ATP = L-glutamyl 5-phosphate + ADP. It functions in the pathway amino-acid biosynthesis; L-proline biosynthesis; L-glutamate 5-semialdehyde from L-glutamate: step 1/2. Catalyzes the transfer of a phosphate group to glutamate to form L-glutamate 5-phosphate. The sequence is that of Glutamate 5-kinase from Clavibacter sepedonicus (Clavibacter michiganensis subsp. sepedonicus).